The following is a 560-amino-acid chain: Bifunctional NAD(P)H-hydrate repair enzyme (560 aa).

The tract at residues 1–241 (MLSRLSERCT…WMTAPERMRV (241 aa)) is NAD(P)H-hydrate epimerase. Residues 29-235 (LRDAEPAAAA…SLGLEDWMTA (207 aa)) enclose the YjeF N-terminal domain. The interval 77–81 (NNGGD) is NADPHX 1; for epimerase activity. Residues Asn-78 and Asp-145 each coordinate K(+). Positions 149–155 (GTGICGP) are NADPHX 1; for epimerase activity. The (6S)-NADPHX site is built by Tyr-160 and Asp-178. Position 181 (Ser-181) interacts with K(+). Residues 249–547 (LDDVYEYFGI…HRVPLIVNAS (299 aa)) form the YjeF C-terminal domain. Residues 249 to 560 (LDDVYEYFGI…PASRQRPSGQ (312 aa)) form an ADP-dependent (S)-NAD(P)H-hydrate dehydratase region. A (6S)-NADPHX-binding site is contributed by Gly-351. An NADPHX 2; for dehydratase activity region spans residues 417–423 (HPGEAAR). Residues 454 to 458 (KGPGT) and 475 to 484 (NAGMASGGMG) each bind ADP. Position 485 (Asp-485) interacts with (6S)-NADPHX.

In the N-terminal section; belongs to the NnrE/AIBP family. This sequence in the C-terminal section; belongs to the NnrD/CARKD family. K(+) is required as a cofactor.

It catalyses the reaction (6S)-NADHX + ADP = AMP + phosphate + NADH + H(+). It carries out the reaction (6S)-NADPHX + ADP = AMP + phosphate + NADPH + H(+). The enzyme catalyses (6R)-NADHX = (6S)-NADHX. The catalysed reaction is (6R)-NADPHX = (6S)-NADPHX. Its function is as follows. Bifunctional enzyme that catalyzes the epimerization of the S- and R-forms of NAD(P)HX and the dehydration of the S-form of NAD(P)HX at the expense of ADP, which is converted to AMP. This allows the repair of both epimers of NAD(P)HX, a damaged form of NAD(P)H that is a result of enzymatic or heat-dependent hydration. In Leishmania major, this protein is Bifunctional NAD(P)H-hydrate repair enzyme.